The following is a 914-amino-acid chain: MFGTIIRHVVGSRNDRLIKKARAIVAQVNALEDRFKAMDDATLAAQTAIFRERLARGEPLDALLPEAFAVVREVSRRVMGMRQYDVQIIGGFMLHEGKIAEMRTGEGKTLVATLPAYLNALQGKGVHVVTVNDYLASRDAEWVGKIHRFLGLSVGTIISDLSSEERRAAYAADITYGTNNEFGFDYLRDNMAFSPADRVQRGLHYAIIDEVDSILIDEARTPLIISGPTEENTDLYYRVDKLVGSFVVDEDYTVDEKARQVMLTEEGIEKAERLMAESGLLVDGDLYDLANVTLVHHLNQALRAHVIYRRETDYIVRDGEVCIVDEFTGRMMSGRRWSDGLHQAVEAKEGVAVQNENQTLASITFQNYFRMYEKLSGMTGTADTEAFELNQIYGLEVVIIPTHRPVCRTDFADLIYRTSQEKWKAIVEDIRGCQQRGQPVLVGTTSIEHNEFLSHLLKQARISHEVLNAKQHQREAEIIAQAGTPGAVTIATNMAGRGTDIVLGGNVGHQVDMVLANPDLEEEEKTRRIESLKSGWQGLHDAAIAAGGLHIIGTERHESRRIDNQLRGRSGRQGDPGTTRFYLSLDDPLMRIFGSDRLSGLMQKLGMKEGEAIEHPWVTKSIENAQRKVESRNFDIRKQLLEYDDVANEQRRIIYQQRNAFMDADDVSAEIRALRDDVLDAVLAATAPEGVMEERWDLPGLEAALDRIFGLQVPVGQWLEQDKGLTHAALRERIMEMVLSAYAAKESLMGSEMTRHFEKSILLQVLDSQWKDHLASMDHLREGIHLRGYAQKNPKQEYKRESLIMFNAMLDQLREEVVSTLSRLHVSPAPAEPLDWDAIARAAQPRHLQFSHPDFAAAAAPLVEDAGLALTGLGVIGEQEAGHSPAISDDKVGRNQPCPCGSGKKYKHCHGRLQ.

ATP is bound by residues Q87, 105-109 (GEGKT), and D500. 4 residues coordinate Zn(2+): C898, C900, C909, and H910.

It belongs to the SecA family. In terms of assembly, monomer and homodimer. Part of the essential Sec protein translocation apparatus which comprises SecA, SecYEG and auxiliary proteins SecDF-YajC and YidC. The cofactor is Zn(2+).

It localises to the cell inner membrane. It is found in the cytoplasm. The enzyme catalyses ATP + H2O + cellular proteinSide 1 = ADP + phosphate + cellular proteinSide 2.. Part of the Sec protein translocase complex. Interacts with the SecYEG preprotein conducting channel. Has a central role in coupling the hydrolysis of ATP to the transfer of proteins into and across the cell membrane, serving as an ATP-driven molecular motor driving the stepwise translocation of polypeptide chains across the membrane. The protein is Protein translocase subunit SecA of Acidithiobacillus ferrooxidans (strain ATCC 23270 / DSM 14882 / CIP 104768 / NCIMB 8455) (Ferrobacillus ferrooxidans (strain ATCC 23270)).